Consider the following 121-residue polypeptide: Large ribosomal subunit protein mL52 (121 aa).

Residues 1-22 (MAALGTWLSSVRRLHCSVVARA) constitute a mitochondrion transit peptide. Over residues 98-109 (QEERKKEHDLKP) the composition is skewed to basic and acidic residues. The interval 98–121 (QEERKKEHDLKPKGTLLRSPLPNQ) is disordered.

This sequence belongs to the mitochondrion-specific ribosomal protein mL52 family. In terms of assembly, component of the mitochondrial ribosome large subunit (39S) which comprises a 16S rRNA and about 50 distinct proteins.

The protein resides in the mitochondrion. The chain is Large ribosomal subunit protein mL52 (Mrpl52) from Mus musculus (Mouse).